The following is a 255-amino-acid chain: Indole-3-glycerol phosphate synthase (255 aa).

The protein belongs to the TrpC family.

The catalysed reaction is 1-(2-carboxyphenylamino)-1-deoxy-D-ribulose 5-phosphate + H(+) = (1S,2R)-1-C-(indol-3-yl)glycerol 3-phosphate + CO2 + H2O. It functions in the pathway amino-acid biosynthesis; L-tryptophan biosynthesis; L-tryptophan from chorismate: step 4/5. In Streptococcus pneumoniae serotype 2 (strain D39 / NCTC 7466), this protein is Indole-3-glycerol phosphate synthase.